Reading from the N-terminus, the 273-residue chain is Polyamine aminopropyltransferase (273 aa).

A PABS domain is found at 5–238; sequence ENWFSERYSD…GFWSFTVASP (234 aa). Gln34 serves as a coordination point for S-methyl-5'-thioadenosine. His65 and Asp90 together coordinate spermidine. Residues Glu109 and 140-141 each bind S-methyl-5'-thioadenosine; that span reads DG. Residue Asp158 is the Proton acceptor of the active site. 158–161 contributes to the spermidine binding site; sequence DSTD. Pro165 contributes to the S-methyl-5'-thioadenosine binding site.

This sequence belongs to the spermidine/spermine synthase family. Homodimer or homotetramer.

It localises to the cytoplasm. The catalysed reaction is S-adenosyl 3-(methylsulfanyl)propylamine + putrescine = S-methyl-5'-thioadenosine + spermidine + H(+). The protein operates within amine and polyamine biosynthesis; spermidine biosynthesis; spermidine from putrescine: step 1/1. Its function is as follows. Catalyzes the irreversible transfer of a propylamine group from the amino donor S-adenosylmethioninamine (decarboxy-AdoMet) to putrescine (1,4-diaminobutane) to yield spermidine. This chain is Polyamine aminopropyltransferase, found in Thermoplasma acidophilum (strain ATCC 25905 / DSM 1728 / JCM 9062 / NBRC 15155 / AMRC-C165).